A 279-amino-acid polypeptide reads, in one-letter code: Fatty-acid-binding protein 1 (279 aa).

The dodecanoate site is built by Arg103, Tyr116, and Ser183.

This sequence belongs to the chalcone isomerase family. Expressed in developing cotyledons, young seedlings, roots, seeds, embryos, macrospores, preanthesis and tapetum. Restricted to developing and reproductive tissues.

It localises to the plastid. The protein resides in the chloroplast stroma. Fatty-acid-binding protein. Interacts preferentially with saturated fatty acid. May be involved in alpha-linolenic (C18:3) metabolism. The sequence is that of Fatty-acid-binding protein 1 (FAP1) from Arabidopsis thaliana (Mouse-ear cress).